Here is a 931-residue protein sequence, read N- to C-terminus: MVSAPLLGWAAIRPIPVSRLKTCKYASNSLQSYNGIVASYLRLHYYRSLSSSAVLAEAIVHLEKTRNIGIIAHIDAGKTTTTERMLYYSGFTRRIGDVDDGSTVTDFLPAERARGITIQSAAITFHWPPLTGDGTSSSPSLEDLEAQNLPRSRASHTVNLIDTPGHADFTFEVLRSLRILDGAVCILDGVAGVEAQTEKVWHQASVYQIPRIVYVNKLDRDGAAFGRTVREVGSRLQGWPAVCQIPWFEGSNGRFTGIADVVSLQGLLWKEGGDGKSVKVFDLNGLENEDKSLAEELKRARVALVELLSEHDEDMVESFFEHEEDHLTVPSITILKSLRKCLLGPETQKIIPVFAGSSFRNMGVQPLLDAVNNLLPGPSESHDPEISLGSDKTSLGNLLSGELALQQDPKTASIEKSKQKKKAVVTRTSVDIKSLTANLESCALAFKVVSDAKRGVLVYVRVYSGSLNRNCHLYNTNLHVTERAPRLFKMYANDAVEVDSIPAGHIGVVVGLKYARTGDTLISCTGSKSVPPEPLNTLQLRPIDVPPPVFFASIEPHSLSEEKNMQEALALLLREDPSLHVTIDEDSGQTLLSGMGELHLEIARDRLVNDFKAKASMGRIEIGYRECVLDQSNPVTKIFDREVAGRKGKAGCTAVVEPYGQELESDGNDTSGSDDIIFTETVDGNKIIISAPGVNITTDKKGKEESTSLPPQLDLNSFRTSLYNGALSALARGPQFAFPMHNTKVTLTCNAAEHLFGSESSASALSAAARLATQGALRNLTTTAASTGTGMMEPVMNVIISVDEASLGAVVHDISSARGGHIVSLDEEMPISTSLSQSPESQDQPVAVDINKIYAPPDPFETPSVAGGLPIQAPANQPRTITAKVPLKEMVGYLKHLRSLSAGRGTFVMHVDRFERMSAQRQKAVLAELNR.

Positions 63-379 (EKTRNIGIIA…AVNNLLPGPS (317 aa)) constitute a tr-type G domain. Residues 72–79 (AHIDAGKT), 162–166 (DTPGH), and 216–219 (NKLD) each bind GTP.

Belongs to the TRAFAC class translation factor GTPase superfamily. Classic translation factor GTPase family. EF-G/EF-2 subfamily.

The protein resides in the mitochondrion. Mitochondrial GTPase that mediates the disassembly of ribosomes from messenger RNA at the termination of mitochondrial protein biosynthesis. Not involved in the GTP-dependent ribosomal translocation step during translation elongation. This is Ribosome-releasing factor 2, mitochondrial (mef2) from Talaromyces stipitatus (strain ATCC 10500 / CBS 375.48 / QM 6759 / NRRL 1006) (Penicillium stipitatum).